Consider the following 297-residue polypeptide: Acetaldehyde dehydrogenase (297 aa).

Residue 15 to 18 participates in NAD(+) binding; it reads SGSI. The active-site Acyl-thioester intermediate is the cysteine 130. NAD(+) is bound by residues 162 to 170 and asparagine 272; that span reads SAGIATREN.

It belongs to the acetaldehyde dehydrogenase family.

It catalyses the reaction acetaldehyde + NAD(+) + CoA = acetyl-CoA + NADH + H(+). In Burkholderia thailandensis (strain ATCC 700388 / DSM 13276 / CCUG 48851 / CIP 106301 / E264), this protein is Acetaldehyde dehydrogenase (mhpF).